The following is a 108-amino-acid chain: Evasin P1127 (108 aa).

The first 28 residues, 1–28, serve as a signal peptide directing secretion; it reads MEAKTFAFLEIAMFIALGIQTFVAVTDA. 3 disulfide bridges follow: C41-C63, C45-C65, and C56-C76. An N-linked (GlcNAc...) asparagine glycan is attached at N44. N89 carries N-linked (GlcNAc...) asparagine glycosylation.

The protein localises to the secreted. In terms of biological role, salivary chemokine-binding protein which binds to host chemokines CXCL1, CXCL2, CXCL3, CXCL5 and CXCL8. In Ixodes ricinus (Common tick), this protein is Evasin P1127.